The chain runs to 118 residues: Beta-2-microglobulin (118 aa).

Positions 1 to 20 are cleaved as a signal peptide; sequence MARFVVLVLLGLLYLSHLDA. The 89-residue stretch at 25 to 113 folds into the Ig-like C1-type domain; that stretch reads PKVQVYSRHP…TTLSEPKVVK (89 aa). A disulfide bridge links C45 with C99.

Belongs to the beta-2-microglobulin family. Heterodimer of an alpha chain and a beta chain. Beta-2-microglobulin is the beta-chain of major histocompatibility complex class I molecules.

The protein localises to the secreted. Component of the class I major histocompatibility complex (MHC). Involved in the presentation of peptide antigens to the immune system. This chain is Beta-2-microglobulin (B2M), found in Felis catus (Cat).